Reading from the N-terminus, the 306-residue chain is sn-1-specific diacylglycerol lipase ABHD11 (306 aa).

The segment at 19-40 (GPSFARVPVAPSSSSGGRGGAE) is disordered. Positions 23–33 (ARVPVAPSSSS) are enriched in low complexity. N6-succinyllysine is present on Lys-78. Active-site charge relay system residues include Ser-132, Asp-228, and His-287.

This sequence belongs to the AB hydrolase superfamily. Interacts with OGDH and DLST; this interaction maintains the functional lipoylation of the 2-oxoglutarate dehydrogenase complex. Post-translationally, phosphorylated. In terms of tissue distribution, ubiquitously expressed. Highly expressed in small intestine, prostate and thyroid, while aorta and colon tissues exhibit weak expression levels.

It localises to the mitochondrion. The protein localises to the mitochondrion matrix. It catalyses the reaction 1-octadecanoyl-2-(5Z,8Z,11Z,14Z-eicosatetraenoyl)-sn-glycerol + H2O = 2-(5Z,8Z,11Z,14Z-eicosatetraenoyl)-glycerol + octadecanoate + H(+). It carries out the reaction a 1,2-diacyl-sn-glycerol + H2O = a 2-acylglycerol + a fatty acid + H(+). The enzyme catalyses a 1,3-diacyl-sn-glycerol + H2O = a 1-acyl-sn-glycerol + a fatty acid + H(+). The catalysed reaction is 1-octadecanoyl-2-(9Z-octadecenoyl)-sn-glycerol + H2O = 2-(9Z-octadecenoyl)-glycerol + octadecanoate + H(+). It catalyses the reaction 1-octadecanoyl-2-(4Z,7Z,10Z,13Z,16Z,19Z-docosahexaenoyl)-sn-glycerol + H2O = 2-(4Z,7Z,10Z,13Z,16Z,19Z-docosahexaenoyl)-glycerol + octadecanoate + H(+). It carries out the reaction 1,2-didecanoylglycerol + H2O = decanoylglycerol + decanoate + H(+). Catalyzes the hydrolysis of diacylglycerol in vitro and may function as a key regulator in lipid metabolism, namely by regulating the intracellular levels of diacylglycerol. 1,2-diacyl-sn-glycerols are the preferred substrate over 1,3-diacyl-sn-glycerols. The enzyme hydrolyzes stearate in preference to palmitate from the sn-1 position of 1,2-diacyl-sn-glycerols. Maintains the functional lipoylation of the 2-oxoglutarate dehydrogenase complex (OGDHc) through its interaction with the OGDHc by preventing the formation of lipoyl adducts. In addition, is also required for the expansion and differentiation of embryonic stem cells (ESCs). This Homo sapiens (Human) protein is sn-1-specific diacylglycerol lipase ABHD11.